The sequence spans 646 residues: Type I inositol polyphosphate 5-phosphatase 2 (646 aa).

Residues 59–74 (TDEDSHNGRRGSEADH) are compositionally biased toward basic and acidic residues. Disordered regions lie at residues 59 to 99 (TDED…GKSE), 185 to 207 (ESVY…SAPS), and 329 to 369 (IDNR…IRNS). Polar residues predominate over residues 188 to 207 (YDQSPSCNNNALHRSHSAPS). Residues 341–350 (EAAKIMHDDS) show a composition bias toward basic and acidic residues. Catalytic regions lie at residues 495 to 510 (DQVF…LNMS) and 575 to 590 (KKRA…WLGK).

This sequence belongs to the inositol polyphosphate 5-phosphatase family. As to expression, expressed ubiquitously.

It carries out the reaction 1D-myo-inositol 1,4,5-trisphosphate + H2O = 1D-myo-inositol 1,4-bisphosphate + phosphate. It catalyses the reaction 1D-myo-inositol 1,3,4,5-tetrakisphosphate + H2O = 1D-myo-inositol 1,3,4-trisphosphate + phosphate. In terms of biological role, has phosphatase activity toward Ins(1,4,5)P3 and Ins(1,3,4,5)P4. Seems to be involved in the abscisic acid (ABA) signaling pathway. Could also be able to hydrolyze PtdIns(4,5)P2 and PtdIns(3,4,5)P3. The sequence is that of Type I inositol polyphosphate 5-phosphatase 2 from Arabidopsis thaliana (Mouse-ear cress).